The following is a 197-amino-acid chain: MKYIPPLNFSPVVSTDVSLYRSGYPMPLNYSFIKHQLHLKTIIYIGDKDRPLEEYQSFLESEKIKYYHIFMDSSRDEGIQERMNQVLHLVLDVRNYPILVHSNKGKHRVGVVVGIIRKLLQGWSTAGICQEYGLFSGGMKDGVDLEFITMFETNLKIPRNVIPGFAKHCLYLNELEAAEGSDDESGSESILTAKQPI.

A Tyrosine-protein phosphatase domain is found at 10-160 (SPVVSTDVSL…FETNLKIPRN (151 aa)). The residue at position 181 (serine 181) is a Phosphoserine.

Belongs to the protein-tyrosine phosphatase family.

It is found in the cytoplasm. Functionally, required for normal growth in the presence of linoleic acid hydroperoxide (LoaOOH). The chain is Tyrosine-protein phosphatase-like protein OCA2 (OCA2) from Saccharomyces cerevisiae (strain ATCC 204508 / S288c) (Baker's yeast).